The chain runs to 165 residues: SsrA-binding protein (165 aa).

Residues 141–165 form a disordered region; the sequence is EDRRHAIAERETKREMDREISRRRR.

This sequence belongs to the SmpB family.

The protein localises to the cytoplasm. Its function is as follows. Required for rescue of stalled ribosomes mediated by trans-translation. Binds to transfer-messenger RNA (tmRNA), required for stable association of tmRNA with ribosomes. tmRNA and SmpB together mimic tRNA shape, replacing the anticodon stem-loop with SmpB. tmRNA is encoded by the ssrA gene; the 2 termini fold to resemble tRNA(Ala) and it encodes a 'tag peptide', a short internal open reading frame. During trans-translation Ala-aminoacylated tmRNA acts like a tRNA, entering the A-site of stalled ribosomes, displacing the stalled mRNA. The ribosome then switches to translate the ORF on the tmRNA; the nascent peptide is terminated with the 'tag peptide' encoded by the tmRNA and targeted for degradation. The ribosome is freed to recommence translation, which seems to be the essential function of trans-translation. The sequence is that of SsrA-binding protein from Anaeromyxobacter sp. (strain Fw109-5).